The following is a 453-amino-acid chain: Argininosuccinate lyase (453 aa).

Belongs to the lyase 1 family. Argininosuccinate lyase subfamily.

The protein resides in the cytoplasm. The enzyme catalyses 2-(N(omega)-L-arginino)succinate = fumarate + L-arginine. It functions in the pathway amino-acid biosynthesis; L-arginine biosynthesis; L-arginine from L-ornithine and carbamoyl phosphate: step 3/3. The sequence is that of Argininosuccinate lyase from Shewanella loihica (strain ATCC BAA-1088 / PV-4).